A 302-amino-acid chain; its full sequence is Sulfate adenylyltransferase subunit 2 (302 aa).

Belongs to the PAPS reductase family. CysD subfamily. Heterodimer composed of CysD, the smaller subunit, and CysN.

The catalysed reaction is sulfate + ATP + H(+) = adenosine 5'-phosphosulfate + diphosphate. It functions in the pathway sulfur metabolism; hydrogen sulfide biosynthesis; sulfite from sulfate: step 1/3. Functionally, with CysN forms the ATP sulfurylase (ATPS) that catalyzes the adenylation of sulfate producing adenosine 5'-phosphosulfate (APS) and diphosphate, the first enzymatic step in sulfur assimilation pathway. APS synthesis involves the formation of a high-energy phosphoric-sulfuric acid anhydride bond driven by GTP hydrolysis by CysN coupled to ATP hydrolysis by CysD. This chain is Sulfate adenylyltransferase subunit 2, found in Yersinia pestis bv. Antiqua (strain Nepal516).